Reading from the N-terminus, the 206-residue chain is Ras-related protein RABG3c (206 aa).

15 to 22 (GDSGVGKT) is a binding site for GTP. An Effector region motif is present at residues 37–45 (YKATIGADF). Residues 63-67 (DTAGQ), 125-128 (NKTD), and 158-159 (SA) contribute to the GTP site. Residues C204 and C206 are each lipidated (S-geranylgeranyl cysteine). Residue C206 is modified to Cysteine methyl ester.

Belongs to the small GTPase superfamily. Rab family.

It is found in the cell membrane. Functionally, intracellular vesicle trafficking and protein transport. The polypeptide is Ras-related protein RABG3c (RABG3C) (Arabidopsis thaliana (Mouse-ear cress)).